A 161-amino-acid polypeptide reads, in one-letter code: Putative pre-16S rRNA nuclease (161 aa).

Belongs to the YqgF nuclease family.

It is found in the cytoplasm. Its function is as follows. Could be a nuclease involved in processing of the 5'-end of pre-16S rRNA. The sequence is that of Putative pre-16S rRNA nuclease from Bradyrhizobium sp. (strain ORS 278).